The primary structure comprises 65 residues: Large ribosomal subunit protein bL35 (65 aa).

Over residues 1–10 the composition is skewed to basic and acidic residues; it reads MPKMKTDRGA. The disordered stretch occupies residues 1–24; the sequence is MPKMKTDRGAAKRFKKTGSGGFKC.

The protein belongs to the bacterial ribosomal protein bL35 family.

This Tolumonas auensis (strain DSM 9187 / NBRC 110442 / TA 4) protein is Large ribosomal subunit protein bL35.